A 225-amino-acid polypeptide reads, in one-letter code: Chromosome partition protein MukE (225 aa).

The disordered stretch occupies residues 197–225 (RDGEAMPIENHLQLNDETEENQPDSGEEE). Residues 212-225 (DETEENQPDSGEEE) are compositionally biased toward acidic residues.

It belongs to the MukE family. In terms of assembly, interacts, and probably forms a ternary complex, with MukF and MukB. The complex formation is stimulated by calcium or magnesium.

It is found in the cytoplasm. The protein localises to the nucleoid. Its function is as follows. Involved in chromosome condensation, segregation and cell cycle progression. May participate in facilitating chromosome segregation by condensation DNA from both sides of a centrally located replisome during cell division. Probably acts via its interaction with MukB and MukF. In Escherichia coli O157:H7, this protein is Chromosome partition protein MukE.